The sequence spans 119 residues: MGVFTFVCKNGGGAWSAKQHEGELESSASSTYELQRKLVQVSLSADSSGGVQSSFSLVSPTSAVFQVIVGGGGGGGFSAGGAASSGGGAGEAAAAPKEDEKKKEESEEEEGDFGFDLFG.

Gly residues predominate over residues 79–90 (AGGAASSGGGAG). Residues 79-119 (AGGAASSGGGAGEAAAAPKEDEKKKEESEEEEGDFGFDLFG) form a disordered region. Residues 96 to 105 (PKEDEKKKEE) are compositionally biased toward basic and acidic residues.

The protein belongs to the eukaryotic ribosomal protein P1/P2 family. Post-translationally, phosphorylated.

Functionally, plays an important role in the elongation step of protein synthesis. This Arabidopsis thaliana (Mouse-ear cress) protein is Large ribosomal subunit protein P3z (RPP3A).